The following is a 974-amino-acid chain: ATP-dependent RNA helicase glh-2 (974 aa).

The tract at residues 212-435 (HESGFGGGKS…SGFGGGNDGG (224 aa)) is disordered. A compositionally biased stretch (gly residues) spans 215–250 (GFGGGKSGGFGGGNSGGSGFGSGGNSNGFGSGGGGQ). Residues 256–267 (NNNCFNCQQPGH) show a composition bias toward polar residues. 2 CCHC-type zinc fingers span residues 257–274 (NNCF…DCPE) and 282–299 (RVCY…DCPE). Basic and acidic residues-rich tracts occupy residues 268 to 282 (RSND…REPR) and 293 to 307 (NSRD…REGR). Over residues 309-364 (GFTGGSSGFGGGNGGGTGFDSGLTNGFGSGNNGESGFGSGGFGGNSNGFGSGGGGQ) the composition is skewed to gly residues. Positions 370 to 381 (NNNCFNCQQPGH) are enriched in polar residues. CCHC-type zinc fingers lie at residues 371–388 (NNCF…DCPE) and 396–413 (RVCY…DCPE). 2 stretches are compositionally biased toward basic and acidic residues: residues 382 to 396 (RSND…REPR) and 407 to 421 (NSRD…REGR). Residues 426 to 435 (SGFGGGNDGG) show a composition bias toward gly residues. 2 consecutive CCHC-type zinc fingers follow at residues 453 to 470 (MKCF…ECPE) and 473 to 490 (RGCF…ECPN). A Q motif motif is present at residues 552–580 (KTFSEANLGETMKKNVAHAGYTKTTPIQQ). Positions 583–767 (LPLIHQGHDI…RNHLKEGYIM (185 aa)) constitute a Helicase ATP-binding domain. An ATP-binding site is contributed by 596-603 (AQTGSGKT). The short motif at 710 to 713 (DEAD) is the DEAD box element. One can recognise a Helicase C-terminal domain in the interval 803-950 (DIDSYTTEKN…LVPEWMQGAS (148 aa)).

It belongs to the DEAD box helicase family. DDX4/VASA subfamily. As to quaternary structure, interacts (via C-terminus) with kgb-1.

It catalyses the reaction ATP + H2O = ADP + phosphate + H(+). Functionally, probable ATP-binding RNA helicase. The chain is ATP-dependent RNA helicase glh-2 (glh-2) from Caenorhabditis elegans.